The following is a 125-amino-acid chain: Large ribosomal subunit protein eL31 (125 aa).

It belongs to the eukaryotic ribosomal protein eL31 family. As to quaternary structure, component of the large ribosomal subunit.

Its subcellular location is the cytoplasm. In terms of biological role, component of the large ribosomal subunit. The ribosome is a large ribonucleoprotein complex responsible for the synthesis of proteins in the cell. The polypeptide is Large ribosomal subunit protein eL31 (rpl31) (Ictalurus punctatus (Channel catfish)).